The sequence spans 465 residues: GTPase Der (465 aa).

EngA-type G domains are found at residues 3 to 167 (PLVA…PEEG) and 179 to 352 (VRIA…ASAT). GTP is bound by residues 9 to 16 (GRPNVGKS), 57 to 61 (DTGGI), 119 to 122 (NKID), 185 to 192 (GRPNVGKS), 232 to 236 (DTAGL), and 297 to 300 (NKWD). The KH-like domain maps to 353 to 437 (HEFSTSEVNQ…PVRFIFREGA (85 aa)).

It belongs to the TRAFAC class TrmE-Era-EngA-EngB-Septin-like GTPase superfamily. EngA (Der) GTPase family. Associates with the 50S ribosomal subunit.

In terms of biological role, GTPase that plays an essential role in the late steps of ribosome biogenesis. The chain is GTPase Der from Xanthomonas axonopodis pv. citri (strain 306).